Here is a 276-residue protein sequence, read N- to C-terminus: ATP synthase subunit a 2 (276 aa).

The next 5 membrane-spanning stretches (helical) occupy residues Ala45–Phe65, Val105–Leu125, Val154–Ile173, Leu226–Trp246, and Ala247–Val267.

This sequence belongs to the ATPase A chain family. As to quaternary structure, F-type ATPases have 2 components, CF(1) - the catalytic core - and CF(0) - the membrane proton channel. CF(1) has five subunits: alpha(3), beta(3), gamma(1), delta(1), epsilon(1). CF(0) has three main subunits: a(1), b(2) and c(9-12). The alpha and beta chains form an alternating ring which encloses part of the gamma chain. CF(1) is attached to CF(0) by a central stalk formed by the gamma and epsilon chains, while a peripheral stalk is formed by the delta and b chains.

It localises to the cell inner membrane. Key component of the proton channel; it plays a direct role in the translocation of protons across the membrane. In Hahella chejuensis (strain KCTC 2396), this protein is ATP synthase subunit a 2.